The following is a 134-amino-acid chain: ATP synthase epsilon chain, chloroplastic (134 aa).

This sequence belongs to the ATPase epsilon chain family. As to quaternary structure, F-type ATPases have 2 components, CF(1) - the catalytic core - and CF(0) - the membrane proton channel. CF(1) has five subunits: alpha(3), beta(3), gamma(1), delta(1), epsilon(1). CF(0) has three main subunits: a, b and c.

It is found in the plastid. Its subcellular location is the chloroplast thylakoid membrane. Functionally, produces ATP from ADP in the presence of a proton gradient across the membrane. The sequence is that of ATP synthase epsilon chain, chloroplastic from Pelargonium hortorum (Common geranium).